Reading from the N-terminus, the 625-residue chain is MTELARKIVAGVGGADNIVSLMHCATRLRFKLKDESKAQAEVLKKTPGIIMVVESGGQFQVVIGNHVADVFLAVNSVAGLDEKAQQAPENDDKGNLLNRFVYVISGIFTPLIGLMAATGILKGMLALALTFQWTTEQSGTYLILFSASDALFWFFPIILGYTAGKRFGGNPFTAMVIGGALVHPLILTAFENGQKADALGLDFLGIPVTLLNYSSSVIPIIFSAWLCSILERRLNAWLPSAIKNFFTPLLCLMVITPVTFLLVGPLSTWISELIAAGYLWLYQAVPAFAGAVMGGFWQIFVMFGLHWGLVPLCINNFTVLGYDTMIPLLMPAIMAQVGAALGVFLCERDAQKKVVAGSAALTSLFGITEPAVYGVNLPRKYPFVIACISGALGATIIGYAQTKVYSFGLPSIFTFMQTIPSTGIDFTVWASVIGGVIAIGCAFVGTVMLHFITAKRQPAQGAPQEKTPEVITPPEQGGICSPMTGEIVPLIHVADTTFASGLLGKGIAILPSVGEVRSPVAGRIASLFATLHAIGIESDDGVEILIHVGIDTVKLDGKFFSAHVNVGDKVNTGDRLISFDIPAIREAGFDLTTPVLISNSDDFTDVLPHGTAQISAGEPLLSIIR.

In terms of domain architecture, PTS EIIB type-1 spans 1–84 (MTELARKIVA…NSVAGLDEKA (84 aa)). The Periplasmic segment spans residues 1 to 99 (MTELARKIVA…NDDKGNLLNR (99 aa)). Catalysis depends on C24, which acts as the Phosphocysteine intermediate; for EIIB activity. A helical membrane pass occupies residues 100-120 (FVYVISGIFTPLIGLMAATGI). The PTS EIIC type-1 domain occupies 102 to 465 (YVISGIFTPL…RQPAQGAPQE (364 aa)). Over 121–140 (LKGMLALALTFQWTTEQSGT) the chain is Cytoplasmic. Residues 141–161 (YLILFSASDALFWFFPIILGY) form a helical membrane-spanning segment. The Periplasmic portion of the chain corresponds to 162–166 (TAGKR). Residues 167–187 (FGGNPFTAMVIGGALVHPLIL) form a helical membrane-spanning segment. Residues 188 to 202 (TAFENGQKADALGLD) are Cytoplasmic-facing. The chain crosses the membrane as a helical span at residues 203–223 (FLGIPVTLLNYSSSVIPIIFS). The Periplasmic segment spans residues 224 to 244 (AWLCSILERRLNAWLPSAIKN). The helical transmembrane segment at 245–265 (FFTPLLCLMVITPVTFLLVGP) threads the bilayer. Residues 266 to 284 (LSTWISELIAAGYLWLYQA) are Cytoplasmic-facing. The chain crosses the membrane as a helical span at residues 285 to 305 (VPAFAGAVMGGFWQIFVMFGL). Topologically, residues 306–324 (HWGLVPLCINNFTVLGYDT) are periplasmic. The chain crosses the membrane as a helical span at residues 325–345 (MIPLLMPAIMAQVGAALGVFL). Residues 346–353 (CERDAQKK) lie on the Cytoplasmic side of the membrane. A helical membrane pass occupies residues 354–374 (VVAGSAALTSLFGITEPAVYG). The Periplasmic portion of the chain corresponds to 375–380 (VNLPRK). The chain crosses the membrane as a helical span at residues 381–401 (YPFVIACISGALGATIIGYAQ). The Cytoplasmic portion of the chain corresponds to 402 to 403 (TK). The chain crosses the membrane as a helical span at residues 404-424 (VYSFGLPSIFTFMQTIPSTGI). Over 425 to 431 (DFTVWAS) the chain is Periplasmic. The chain crosses the membrane as a helical span at residues 432-452 (VIGGVIAIGCAFVGTVMLHFI). The Cytoplasmic portion of the chain corresponds to 453–625 (TAKRQPAQGA…AGEPLLSIIR (173 aa)). Residues 495 to 599 (DTTFASGLLG…DLTTPVLISN (105 aa)) enclose the PTS EIIA type-1 domain. H547 functions as the Tele-phosphohistidine intermediate; for EIIA activity in the catalytic mechanism.

The protein localises to the cell inner membrane. Its function is as follows. The phosphoenolpyruvate-dependent sugar phosphotransferase system (sugar PTS), a major carbohydrate active -transport system, catalyzes the phosphorylation of incoming sugar substrates concomitantly with their translocation across the cell membrane. This system is involved in beta-glucoside transport. Functionally, acts both as a kinase and as a phosphatase on BglG. This chain is PTS system beta-glucoside-specific EIIBCA component (bglF), found in Escherichia coli (strain K12).